Here is a 130-residue protein sequence, read N- to C-terminus: uncharacterized protein (130 aa).

N-linked (GlcNAc...) asparagine glycosylation occurs at asparagine 102. The chain crosses the membrane as a helical span at residues 110–130 (DPLAFYLMFLIIITILLIMIL).

Its subcellular location is the membrane. This is an uncharacterized protein from Dictyostelium discoideum (Social amoeba).